Consider the following 68-residue polypeptide: Protein transport protein Sec61 gamma-2 subunit (68 aa).

The Cytoplasmic segment spans residues 1–32 (MDKVVKFAEPGRAFAKDSIRLVKRCTKPDRKE). The chain crosses the membrane as a helical span at residues 33 to 61 (FQKIAIATAVGFCIMGFIGFFVKLIHIPI). Topologically, residues 62–68 (NNIIVGS) are extracellular.

It belongs to the SecE/SEC61-gamma family. As to quaternary structure, heterotrimeric complex composed of SEC61-alpha, SEC61-beta and SEC61-gamma.

The protein resides in the endoplasmic reticulum membrane. In terms of biological role, necessary for protein translocation in the endoplasmic reticulum. The sequence is that of Protein transport protein Sec61 gamma-2 subunit (Sec61gamma) from Drosophila melanogaster (Fruit fly).